Reading from the N-terminus, the 275-residue chain is Formamidopyrimidine-DNA glycosylase (275 aa).

The active-site Schiff-base intermediate with DNA is the Pro2. Residue Glu3 is the Proton donor of the active site. Catalysis depends on Lys58, which acts as the Proton donor; for beta-elimination activity. 3 residues coordinate DNA: His93, Arg111, and Arg156. The segment at 241-275 adopts an FPG-type zinc-finger fold; that stretch reads FVYDRAGQPCRVCGTPVRQIVQGQRSTYFCPTCQR. Catalysis depends on Arg265, which acts as the Proton donor; for delta-elimination activity.

Belongs to the FPG family. In terms of assembly, monomer. It depends on Zn(2+) as a cofactor.

It carries out the reaction Hydrolysis of DNA containing ring-opened 7-methylguanine residues, releasing 2,6-diamino-4-hydroxy-5-(N-methyl)formamidopyrimidine.. It catalyses the reaction 2'-deoxyribonucleotide-(2'-deoxyribose 5'-phosphate)-2'-deoxyribonucleotide-DNA = a 3'-end 2'-deoxyribonucleotide-(2,3-dehydro-2,3-deoxyribose 5'-phosphate)-DNA + a 5'-end 5'-phospho-2'-deoxyribonucleoside-DNA + H(+). Its function is as follows. Involved in base excision repair of DNA damaged by oxidation or by mutagenic agents. Acts as a DNA glycosylase that recognizes and removes damaged bases. Has a preference for oxidized purines, such as 7,8-dihydro-8-oxoguanine (8-oxoG). Has AP (apurinic/apyrimidinic) lyase activity and introduces nicks in the DNA strand. Cleaves the DNA backbone by beta-delta elimination to generate a single-strand break at the site of the removed base with both 3'- and 5'-phosphates. In Burkholderia cenocepacia (strain HI2424), this protein is Formamidopyrimidine-DNA glycosylase.